Reading from the N-terminus, the 907-residue chain is Catenin alpha-1 (907 aa).

At threonine 2 the chain carries N-acetylthreonine. The involved in homodimerization stretch occupies residues threonine 2–cysteine 228. Lysine 57 is covalently cross-linked (Glycyl lysine isopeptide (Lys-Gly) (interchain with G-Cter in SUMO2)). An interaction with JUP and CTNNB1 region spans residues valine 97–tyrosine 148. 4 positions are modified to phosphoserine: serine 264, serine 268, serine 296, and serine 298. Residues threonine 326–phenylalanine 395 form an interaction with alpha-actinin region. Threonine 635 bears the Phosphothreonine mark. Residue serine 642 is modified to Phosphoserine. Position 646 is a phosphothreonine (threonine 646). Serine 653 and serine 656 each carry phosphoserine. At threonine 659 the chain carries Phosphothreonine. Residue lysine 798 forms a Glycyl lysine isopeptide (Lys-Gly) (interchain with G-Cter in SUMO2) linkage. Serine 852 is subject to Phosphoserine. Residues proline 865–threonine 881 show a composition bias toward basic and acidic residues. Positions proline 865–valine 895 are disordered. Residues lysine 882 to valine 892 are compositionally biased toward basic residues.

This sequence belongs to the vinculin/alpha-catenin family. As to quaternary structure, monomer and homodimer; the monomer preferentially binds to CTNNB1 and the homodimer to actin. Component of an cadherin:catenin adhesion complex composed of at least of CDH26, beta-catenin/CTNNB1, alpha-catenin/CTNNA1 and p120 catenin/CTNND1. Possible component of an E-cadherin/ catenin adhesion complex together with E-cadherin/CDH1 and beta-catenin/CTNNB1 or gamma-catenin/JUP; the complex is located to adherens junctions. The stable association of CTNNA1 is controversial as CTNNA1 was shown not to bind to F-actin when assembled in the complex. Alternatively, the CTNNA1-containing complex may be linked to F-actin by other proteins such as LIMA1. Binds AFDN and F-actin. Interacts with ARHGAP21. Interacts with AJUBA. Interacts with LIMA1. Interacts with vinculin/VCL. Interacts with TJP2/ZO2 (via N-terminus). Interacts with TJP1/ZO1 (via N-terminus). Sumoylated. In terms of processing, phosphorylation seems to contribute to the strength of cell-cell adhesion rather than to the basic capacity for cell-cell adhesion.

It localises to the cytoplasm. The protein resides in the cytoskeleton. Its subcellular location is the cell junction. The protein localises to the adherens junction. It is found in the cell membrane. It localises to the nucleus. Functionally, associates with the cytoplasmic domain of a variety of cadherins. The association of catenins to cadherins produces a complex which is linked to the actin filament network, and which seems to be of primary importance for cadherins cell-adhesion properties. Can associate with both E- and N-cadherins. Originally believed to be a stable component of E-cadherin/catenin adhesion complexes and to mediate the linkage of cadherins to the actin cytoskeleton at adherens junctions. In contrast, cortical actin was found to be much more dynamic than E-cadherin/catenin complexes and CTNNA1 was shown not to bind to F-actin when assembled in the complex suggesting a different linkage between actin and adherens junctions components. The homodimeric form may regulate actin filament assembly and inhibit actin branching by competing with the Arp2/3 complex for binding to actin filaments. Involved in the regulation of WWTR1/TAZ, YAP1 and TGFB1-dependent SMAD2 and SMAD3 nuclear accumulation. May play a crucial role in cell differentiation. The sequence is that of Catenin alpha-1 from Oryctolagus cuniculus (Rabbit).